Reading from the N-terminus, the 379-residue chain is Dual-specificity RNA methyltransferase RlmN (379 aa).

Residue E95 is the Proton acceptor of the active site. Positions 101-345 constitute a Radical SAM core domain; the sequence is EETRGTLCVS…TTVRKTRGDD (245 aa). A disulfide bond links C108 and C350. [4Fe-4S] cluster is bound by residues C115, C119, and C122. Residues 176-177, S208, 230-232, and N307 contribute to the S-adenosyl-L-methionine site; these read GE and SLH. Catalysis depends on C350, which acts as the S-methylcysteine intermediate.

It belongs to the radical SAM superfamily. RlmN family. [4Fe-4S] cluster serves as cofactor.

The protein localises to the cytoplasm. It carries out the reaction adenosine(2503) in 23S rRNA + 2 reduced [2Fe-2S]-[ferredoxin] + 2 S-adenosyl-L-methionine = 2-methyladenosine(2503) in 23S rRNA + 5'-deoxyadenosine + L-methionine + 2 oxidized [2Fe-2S]-[ferredoxin] + S-adenosyl-L-homocysteine. The enzyme catalyses adenosine(37) in tRNA + 2 reduced [2Fe-2S]-[ferredoxin] + 2 S-adenosyl-L-methionine = 2-methyladenosine(37) in tRNA + 5'-deoxyadenosine + L-methionine + 2 oxidized [2Fe-2S]-[ferredoxin] + S-adenosyl-L-homocysteine. Functionally, specifically methylates position 2 of adenine 2503 in 23S rRNA and position 2 of adenine 37 in tRNAs. m2A2503 modification seems to play a crucial role in the proofreading step occurring at the peptidyl transferase center and thus would serve to optimize ribosomal fidelity. This chain is Dual-specificity RNA methyltransferase RlmN, found in Burkholderia lata (strain ATCC 17760 / DSM 23089 / LMG 22485 / NCIMB 9086 / R18194 / 383).